Here is a 77-residue protein sequence, read N- to C-terminus: U11-lycotoxin-Ls1a (77 aa).

The signal sequence occupies residues 1-20 (MKLIILTGLVLFAIVSLIEA). Residues 21–26 (EEESGR) constitute a propeptide that is removed on maturation.

This sequence belongs to the neurotoxin 19 (CSTX) family. 10 (U11-Lctx) subfamily. Contains 4 disulfide bonds. Expressed by the venom gland.

The protein localises to the secreted. The protein is U11-lycotoxin-Ls1a of Lycosa singoriensis (Wolf spider).